Here is a 274-residue protein sequence, read N- to C-terminus: Putative pyruvate, phosphate dikinase regulatory protein (274 aa).

Residue 153–160 (GISRTSKT) coordinates ADP.

The protein belongs to the pyruvate, phosphate/water dikinase regulatory protein family. PDRP subfamily.

The catalysed reaction is N(tele)-phospho-L-histidyl/L-threonyl-[pyruvate, phosphate dikinase] + ADP = N(tele)-phospho-L-histidyl/O-phospho-L-threonyl-[pyruvate, phosphate dikinase] + AMP + H(+). It catalyses the reaction N(tele)-phospho-L-histidyl/O-phospho-L-threonyl-[pyruvate, phosphate dikinase] + phosphate + H(+) = N(tele)-phospho-L-histidyl/L-threonyl-[pyruvate, phosphate dikinase] + diphosphate. In terms of biological role, bifunctional serine/threonine kinase and phosphorylase involved in the regulation of the pyruvate, phosphate dikinase (PPDK) by catalyzing its phosphorylation/dephosphorylation. This is Putative pyruvate, phosphate dikinase regulatory protein from Bartonella henselae (strain ATCC 49882 / DSM 28221 / CCUG 30454 / Houston 1) (Rochalimaea henselae).